The chain runs to 400 residues: MQESTMKFGIVIVAAGRGERAGSPEEGPKQYRPIGGRAVIEHTLATFLRWNDACPIVVVSHADDAALLSPILARLDAGERITTVTGGATRQQSVLAGLEALSSHGLTHVMIHDAVRPFVAADMLERIAALHRAGAGGVLPALPVTDTLKRGLEDRVVETVSRQGLYAAQTPQSFSYSDILDAHRAAAASGKTDFTDDASIAEWTGLTVTLTEGSVDNVKLTLKRDIAMADEKLSHALPDVRTGNGYDVHQLEAGDGVTLCGIFIEHDQRLKGHSDADVALHALTDALLATCGAGDIGDHFPPSDPQWKGAASRIFLEHAAKVVRDNGGTIMNADVSLIAEAPRIGPHRQAMREALSDMLGIALERCSVKATTNETIGFVGRREGIAAIATATVVYQGRPL.

The 2-C-methyl-D-erythritol 4-phosphate cytidylyltransferase stretch occupies residues 1–240 (MQESTMKFGI…EKLSHALPDV (240 aa)). The interval 241 to 400 (RTGNGYDVHQ…ATVVYQGRPL (160 aa)) is 2-C-methyl-D-erythritol 2,4-cyclodiphosphate synthase. Aspartate 247 and histidine 249 together coordinate a divalent metal cation. 4-CDP-2-C-methyl-D-erythritol 2-phosphate is bound by residues 247-249 (DVH) and 273-274 (HS). Position 281 (histidine 281) interacts with a divalent metal cation. Residues 295 to 297 (DIG), 371 to 374 (TTNE), phenylalanine 378, and arginine 381 contribute to the 4-CDP-2-C-methyl-D-erythritol 2-phosphate site.

This sequence in the N-terminal section; belongs to the IspD/TarI cytidylyltransferase family. IspD subfamily. It in the C-terminal section; belongs to the IspF family. The cofactor is a divalent metal cation.

It carries out the reaction 2-C-methyl-D-erythritol 4-phosphate + CTP + H(+) = 4-CDP-2-C-methyl-D-erythritol + diphosphate. The enzyme catalyses 4-CDP-2-C-methyl-D-erythritol 2-phosphate = 2-C-methyl-D-erythritol 2,4-cyclic diphosphate + CMP. It functions in the pathway isoprenoid biosynthesis; isopentenyl diphosphate biosynthesis via DXP pathway; isopentenyl diphosphate from 1-deoxy-D-xylulose 5-phosphate: step 2/6. Its pathway is isoprenoid biosynthesis; isopentenyl diphosphate biosynthesis via DXP pathway; isopentenyl diphosphate from 1-deoxy-D-xylulose 5-phosphate: step 4/6. Its function is as follows. Bifunctional enzyme that catalyzes the formation of 4-diphosphocytidyl-2-C-methyl-D-erythritol from CTP and 2-C-methyl-D-erythritol 4-phosphate (MEP) (IspD), and catalyzes the conversion of 4-diphosphocytidyl-2-C-methyl-D-erythritol 2-phosphate (CDP-ME2P) to 2-C-methyl-D-erythritol 2,4-cyclodiphosphate (ME-CPP) with a corresponding release of cytidine 5-monophosphate (CMP) (IspF). The polypeptide is Bifunctional enzyme IspD/IspF (Agrobacterium fabrum (strain C58 / ATCC 33970) (Agrobacterium tumefaciens (strain C58))).